Reading from the N-terminus, the 66-residue chain is UPF0337 protein M6_Spy1542 (66 aa).

Basic and acidic residues predominate over residues Met1–Val10. The interval Met1 to Gly22 is disordered.

It belongs to the UPF0337 (CsbD) family.

The sequence is that of UPF0337 protein M6_Spy1542 from Streptococcus pyogenes serotype M6 (strain ATCC BAA-946 / MGAS10394).